The sequence spans 343 residues: Thiamine thiazole synthase 4, chloroplastic (343 aa).

Residues alanine 89, 109–110 (EQ), glycine 117, and alanine 182 each bind substrate. At cysteine 211 the chain carries 2,3-didehydroalanine (Cys). Residues aspartate 213, histidine 228, methionine 280, and 290-292 (RMG) each bind substrate.

It belongs to the THI4 family. As to quaternary structure, homooctamer. It depends on Fe cation as a cofactor. In terms of processing, during the catalytic reaction, a sulfide is transferred from Cys-211 to a reaction intermediate, generating a dehydroalanine residue.

The protein resides in the plastid. The protein localises to the chloroplast. It carries out the reaction [ADP-thiazole synthase]-L-cysteine + glycine + NAD(+) = [ADP-thiazole synthase]-dehydroalanine + ADP-5-ethyl-4-methylthiazole-2-carboxylate + nicotinamide + 3 H2O + 2 H(+). Its function is as follows. Involved in biosynthesis of the thiamine precursor thiazole. Catalyzes the conversion of NAD and glycine to adenosine diphosphate 5-(2-hydroxyethyl)-4-methylthiazole-2-carboxylic acid (ADT), an adenylated thiazole intermediate. The reaction includes an iron-dependent sulfide transfer from a conserved cysteine residue of the protein to a thiazole intermediate. The enzyme can only undergo a single turnover, which suggests it is a suicide enzyme. May have additional roles in adaptation to various stress conditions and in DNA damage tolerance. The sequence is that of Thiamine thiazole synthase 4, chloroplastic from Physcomitrium patens (Spreading-leaved earth moss).